We begin with the raw amino-acid sequence, 431 residues long: Protein S-Myc (431 aa).

Phosphotyrosine; by Tyr-kinases is present on Tyr-36. One can recognise a bHLH domain in the interval 348 to 400 (ERRRNHNRMERQRRDIMRSSFLNLRDLVPELVHNEKAAKVVILKKATEYIHTL). A leucine-zipper region spans residues 400-421 (LQADESKLLVERKKLYERQQQL).

In terms of assembly, efficient DNA binding requires dimerization with another bHLH protein.

The protein resides in the nucleus. Functionally, has apoptosis-inducing activity. The polypeptide is Protein S-Myc (Mycs) (Mus musculus (Mouse)).